A 294-amino-acid polypeptide reads, in one-letter code: 4-diphosphocytidyl-2-C-methyl-D-erythritol kinase (294 aa).

Lys19 is an active-site residue. Pro106–Ala116 contributes to the ATP binding site. The active site involves Asp148.

Belongs to the GHMP kinase family. IspE subfamily.

It catalyses the reaction 4-CDP-2-C-methyl-D-erythritol + ATP = 4-CDP-2-C-methyl-D-erythritol 2-phosphate + ADP + H(+). Its pathway is isoprenoid biosynthesis; isopentenyl diphosphate biosynthesis via DXP pathway; isopentenyl diphosphate from 1-deoxy-D-xylulose 5-phosphate: step 3/6. Its function is as follows. Catalyzes the phosphorylation of the position 2 hydroxy group of 4-diphosphocytidyl-2C-methyl-D-erythritol. The chain is 4-diphosphocytidyl-2-C-methyl-D-erythritol kinase from Rhizobium etli (strain ATCC 51251 / DSM 11541 / JCM 21823 / NBRC 15573 / CFN 42).